The following is a 301-amino-acid chain: MYLNMTHLRQLESESIHIIREVVSECENPVMLYSIGKDSSVMLHLALKAFYPAKPSFPLMHIDTTWKFREMISFRDQMASEYGFDLLVHINQDGVDQGISPFKHGSALYTDIMKTEGLKQALSKYKFDAAFGGARRDEEKSRAKERIFSFRSANHGWDPKNQRPELWNLYNTRVNPGENIRVFPLSNWTELDVWQYIYLEQIPIVPLYFAKQRPVVKRNGMLILLDDERLKLQPGEQVQMKPVRFRTLGCYPLTGAIESTAATLPEIIQEMLLTRTSERQGRLIDHDQAGSMEKKKQEGYF.

This sequence belongs to the PAPS reductase family. CysD subfamily. Heterodimer composed of CysD, the smaller subunit, and CysN.

The enzyme catalyses sulfate + ATP + H(+) = adenosine 5'-phosphosulfate + diphosphate. Its pathway is sulfur metabolism; hydrogen sulfide biosynthesis; sulfite from sulfate: step 1/3. Its function is as follows. With CysN forms the ATP sulfurylase (ATPS) that catalyzes the adenylation of sulfate producing adenosine 5'-phosphosulfate (APS) and diphosphate, the first enzymatic step in sulfur assimilation pathway. APS synthesis involves the formation of a high-energy phosphoric-sulfuric acid anhydride bond driven by GTP hydrolysis by CysN coupled to ATP hydrolysis by CysD. This chain is Sulfate adenylyltransferase subunit 2, found in Trichlorobacter lovleyi (strain ATCC BAA-1151 / DSM 17278 / SZ) (Geobacter lovleyi).